The sequence spans 86 residues: Large ribosomal subunit protein eL20 (86 aa).

The protein belongs to the eukaryotic ribosomal protein eL20 family. Part of the 50S ribosomal subunit. Binds 23S rRNA.

The sequence is that of Large ribosomal subunit protein eL20 from Saccharolobus solfataricus (strain ATCC 35092 / DSM 1617 / JCM 11322 / P2) (Sulfolobus solfataricus).